The primary structure comprises 1001 residues: E3 ubiquitin-protein ligase BRE1B (1001 aa).

The disordered stretch occupies residues 1-40; sequence MSGLSNKRAAGDGGSGPPEKKMNREEKTTTTLIEPIRLGG. Residues 18 to 28 are compositionally biased toward basic and acidic residues; the sequence is PEKKMNREEKT. Lys20 is modified (N6-acetyllysine). Residue Ser42 is modified to Phosphoserine. Residues 55–91 adopt a coiled-coil conformation; sequence KNKKLAERLEQRQACEDELRERIEKLEKRQATDDATL. The disordered stretch occupies residues 122 to 142; the sequence is TEVPGCQEGLTRDVIPRPDPG. Coiled-coil stretches lie at residues 189–377 and 437–525; these read KAAV…LRSL and LQKK…ASGS. 2 positions are modified to N6-acetyllysine: Lys355 and Lys517. The disordered stretch occupies residues 519-647; that stretch reads RAQASGSSHC…KAKVEEAKRK (129 aa). Positions 565-576 are enriched in low complexity; it reads ALLAGATSATSS. Residues Lys578 and Lys579 each participate in a glycyl lysine isopeptide (Lys-Gly) (interchain with G-Cter in SUMO2) cross-link. Ser584 and Ser585 each carry phosphoserine. Basic and acidic residues-rich tracts occupy residues 602 to 619 and 633 to 647; these read RGRE…EREG and RADR…AKRK. The stretch at 627–946 forms a coiled coil; sequence AASTLSRADR…EEIKEYKARL (320 aa). Residues 948–987 form an RING-type zinc finger; the sequence is CPCCNTRKKDAVLTKCFHVFCFECVRGRYEARQRKCPKCN.

This sequence belongs to the BRE1 family. In terms of assembly, component of the RNF20/40 complex (also known as BRE1 complex) probably composed of 2 copies of RNF20/BRE1A and 2 copies of RNF40/BRE1B. Interacts with UBE2E1/UBCH6. Interacts with RB1 and WAC.

The protein resides in the nucleus. It catalyses the reaction S-ubiquitinyl-[E2 ubiquitin-conjugating enzyme]-L-cysteine + [acceptor protein]-L-lysine = [E2 ubiquitin-conjugating enzyme]-L-cysteine + N(6)-ubiquitinyl-[acceptor protein]-L-lysine.. It participates in protein modification; protein ubiquitination. Functionally, component of the RNF20/40 E3 ubiquitin-protein ligase complex that mediates monoubiquitination of 'Lys-120' of histone H2B (H2BK120ub1). H2BK120ub1 gives a specific tag for epigenetic transcriptional activation and is also prerequisite for histone H3 'Lys-4' and 'Lys-79' methylation (H3K4me and H3K79me, respectively). It thereby plays a central role in histone code and gene regulation. The RNF20/40 complex forms a H2B ubiquitin ligase complex in cooperation with the E2 enzyme UBE2A or UBE2B; reports about the cooperation with UBE2E1/UBCH are contradictory. Required for transcriptional activation of Hox genes. This chain is E3 ubiquitin-protein ligase BRE1B (Rnf40), found in Mus musculus (Mouse).